The chain runs to 492 residues: Sestrin-3 (492 aa).

Positions 62–243 (LVEEYSTSGR…VCDLANDNSI (182 aa)) are N-terminal domain; may mediate the alkylhydroperoxide reductase activity. Catalysis depends on cysteine 121, which acts as the Cysteine sulfenic acid (-SOH) intermediate. Residues 310–492 (PHSDFEDDVI…ALRAITRHLT (183 aa)) form a C-terminal domain; mediates TORC1 regulation region. L-leucine is bound by residues 386 to 389 (TYNT), threonine 398, and glutamate 463.

This sequence belongs to the sestrin family. Interacts with the GATOR2 complex which is composed of MIOS, SEC13, SEH1L, WDR24 and WDR59; the interaction is not regulated by leucine. Interacts with RRAGA, RRAGB, RRAGC and RRAGD; may function as a guanine nucleotide dissociation inhibitor for RRAGs and regulate them. Interacts with the TORC2 complex; through RICTOR. As to expression, detected in liver and skeletal muscles.

The protein localises to the cytoplasm. The catalysed reaction is a hydroperoxide + L-cysteinyl-[protein] = S-hydroxy-L-cysteinyl-[protein] + an alcohol. In terms of biological role, may function as an intracellular leucine sensor that negatively regulates the TORC1 signaling pathway. May also regulate the insulin-receptor signaling pathway through activation of TORC2. This metabolic regulator may also play a role in protection against oxidative and genotoxic stresses. May prevent the accumulation of reactive oxygen species (ROS) through the alkylhydroperoxide reductase activity born by the N-terminal domain of the protein. The protein is Sestrin-3 of Mus musculus (Mouse).